Reading from the N-terminus, the 460-residue chain is MATGKIVQVIGAVVDVEFPQDAVPRVYDALEVQNGNESLVLEVQQQLGGGIVRTIAMGSSDGLRRGLAVKDLEHPIEVPVGKATLGRIMNVLGQPIDMKGDIGEEDRWAIHRAAPSYEELSSSQELLETGIKVIDLMCPFAKGGKVGLFGGAGVGKTVNMMELIRNIAIEHSGYSVFAGVGERTREGNDFYHEMTDSNVLDKVSLVYGQMNEPPGNRLRVALTGLTMAEKFRDEGRDVLLFVDNIYRYTLAGTEVSALLGRMPSAVGYQPTLAEEMGVLQERITSTKTGSITSVQAVYVPADDLTDPSPATTFAHLDATVVLSRQIASLGIYPAVDPLDSTSRQLDPLVVGQEHYDTARGVQSLLQRYQELKDIIAILGMDELSEEDKLVVARARKIQRFLSQPFFVAEVFTGSPGKYVSLKDTIRGFKGIMEGEYDHLPEQAFYMVGSIDEAVEKAKKL.

Residue 150-157 participates in ATP binding; it reads GGAGVGKT.

It belongs to the ATPase alpha/beta chains family. As to quaternary structure, F-type ATPases have 2 components, CF(1) - the catalytic core - and CF(0) - the membrane proton channel. CF(1) has five subunits: alpha(3), beta(3), gamma(1), delta(1), epsilon(1). CF(0) has three main subunits: a(1), b(2) and c(9-12). The alpha and beta chains form an alternating ring which encloses part of the gamma chain. CF(1) is attached to CF(0) by a central stalk formed by the gamma and epsilon chains, while a peripheral stalk is formed by the delta and b chains.

Its subcellular location is the cell inner membrane. It carries out the reaction ATP + H2O + 4 H(+)(in) = ADP + phosphate + 5 H(+)(out). In terms of biological role, produces ATP from ADP in the presence of a proton gradient across the membrane. The catalytic sites are hosted primarily by the beta subunits. In Enterobacter sp. (strain 638), this protein is ATP synthase subunit beta.